A 610-amino-acid polypeptide reads, in one-letter code: DNA replication regulator sld2 (610 aa).

Positions 28–42 are enriched in basic and acidic residues; the sequence is WAQKNDGKKPSREAI. 3 disordered regions span residues 28–115, 127–261, and 338–610; these read WAQK…AVHE, SPAV…ERSV, and EQGG…RRRR. Composition is skewed to polar residues over residues 86-110 and 232-261; these read ETSL…SQHY and TKTS…ERSV. Acidic residues-rich tracts occupy residues 373-386 and 414-428; these read VPEE…DEAA and FDDE…EEDL. The span at 442–464 shows a compositional bias: basic residues; it reads VFKKKGQKRTTRKVNMRPTRTKR. Residues 470–480 are compositionally biased toward acidic residues; sequence AEEEDDGEEEH. The segment covering 493–503 has biased composition (basic and acidic residues); that stretch reads KNLDGDDHHTL. Acidic residues predominate over residues 514-527; sequence EFDDGSEGEDEEAE. Over residues 544 to 573 the composition is skewed to basic and acidic residues; it reads SAKEKTKKDATTETKKKKGTKEGGDEEPAK.

The protein belongs to the SLD2 family.

It localises to the cytoplasm. The protein localises to the nucleus. Its function is as follows. Has a role in the initiation of DNA replication. Required at S-phase checkpoint. This Neurospora crassa (strain ATCC 24698 / 74-OR23-1A / CBS 708.71 / DSM 1257 / FGSC 987) protein is DNA replication regulator sld2 (drc-4).